Consider the following 920-residue polypeptide: Rho guanine nucleotide exchange factor 1 (920 aa).

The region spanning 39-230 (DQNSQFQSLE…SLYMRHLGVR (192 aa)) is the RGSL domain. The segment at 231–404 (TKSGDKKSGR…PGWRELVPPD (174 aa)) is disordered. A compositionally biased stretch (basic and acidic residues) spans 281–311 (DCRHLKVEADAEKPGPADRKGGLGMSSRDRT). The segment covering 364 to 380 (STEDNGETESPEPGDDG) has biased composition (acidic residues). Phosphoserine occurs at positions 373, 386, 390, 408, and 412. The region spanning 415-604 (KRQEVISELL…REILHHVNQA (190 aa)) is the DH domain. A phosphothreonine mark is found at Arg432 and Thr694. The 114-residue stretch at 646–759 (KLVHEGPLTW…WCNLITETAG (114 aa)) folds into the PH domain. Position 737 is a phosphotyrosine; by JAK2 (Tyr737). 2 disordered regions span residues 764 to 797 (PAPA…AEMA) and 840 to 864 (TEED…PGPV). Positions 865–894 (HTQEIEENLLSLEVAIRQLEELEEEFCRLR) form a coiled coil. Ser905 is subject to Phosphoserine.

Interacts with RHOA, GNA12 and GNA13. Homooligomerizes through the coiled coil region. Interacts with CTNNAL1. May interact with CCPG1. Phosphorylated by PKCA. Angiotensin-2 induced Tyr-737 phosphorylation is mediated by JAK2. Isoform 5 is phosphorylated at 'Ser-390'. As to expression, ubiquitously expressed.

Its subcellular location is the cytoplasm. It localises to the membrane. Its function is as follows. Seems to play a role in the regulation of RhoA GTPase by guanine nucleotide-binding alpha-12 (GNA12) and alpha-13 (GNA13) subunits. Acts as a GTPase-activating protein (GAP) for GNA12 and GNA13, and as guanine nucleotide exchange factor (GEF) for RhoA GTPase. Activated G alpha 13/GNA13 stimulates the RhoGEF activity through interaction with the RGS-like domain. This GEF activity is inhibited by binding to activated GNA12. Mediates angiotensin-2-induced RhoA activation. Isoform 3 and isoform 4 do not homooligomerize and show an enhanced RhoGEF activity. In lymphoid follicles, may trigger activation of GNA13 as part of S1PR2-dependent signaling pathway that leads to inhibition of germinal center (GC) B cell growth and migration outside the GC niche. The chain is Rho guanine nucleotide exchange factor 1 (Arhgef1) from Mus musculus (Mouse).